We begin with the raw amino-acid sequence, 83 residues long: Bowman-Birk type proteinase inhibitor (83 aa).

7 disulfides stabilise this stretch: cysteine 18–cysteine 72, cysteine 19–cysteine 34, cysteine 22–cysteine 68, cysteine 24–cysteine 32, cysteine 42–cysteine 49, cysteine 46–cysteine 61, and cysteine 51–cysteine 59.

Belongs to the Bowman-Birk serine protease inhibitor family.

This is Bowman-Birk type proteinase inhibitor from Phaseolus lunatus (Lima bean).